Consider the following 952-residue polypeptide: Leucine--tRNA ligase (952 aa).

The short motif at 48 to 58 (PYLNGVLHAGH) is the 'HIGH' region element. Positions 644–648 (KLSKS) match the 'KMSKS' region motif. ATP is bound at residue K647.

This sequence belongs to the class-I aminoacyl-tRNA synthetase family.

The protein localises to the cytoplasm. It catalyses the reaction tRNA(Leu) + L-leucine + ATP = L-leucyl-tRNA(Leu) + AMP + diphosphate. In Methanococcus vannielii (strain ATCC 35089 / DSM 1224 / JCM 13029 / OCM 148 / SB), this protein is Leucine--tRNA ligase.